Reading from the N-terminus, the 102-residue chain is MNQINIEIAYAFPERYYLKSFQVDEGITVQTAITQSGILSQFPEIDLSTNKIGIFSRPIKLTDVLKEGDRIEIYRPLLADPKEIRRKRAAEQAAAKNKEKGA.

The protein belongs to the UPF0125 (RnfH) family.

The polypeptide is Protein RnfH (Haemophilus influenzae (strain PittEE)).